We begin with the raw amino-acid sequence, 105 residues long: Small ribosomal subunit protein uS10 (105 aa).

It belongs to the universal ribosomal protein uS10 family. Part of the 30S ribosomal subunit.

Involved in the binding of tRNA to the ribosomes. In Roseobacter denitrificans (strain ATCC 33942 / OCh 114) (Erythrobacter sp. (strain OCh 114)), this protein is Small ribosomal subunit protein uS10.